Consider the following 98-residue polypeptide: MSMVHMNIMMAFAVSLVGLLMYRSHLMSSLLCLEGMMLSLFVMAALTILNSHFTLASMMPIILLVFAACEAALGLSLLVMVSNTYGTDYVQNLNLLQC.

3 consecutive transmembrane segments (helical) span residues 1–21 (MSMVHMNIMMAFAVSLVGLLM), 29–49 (SLLCLEGMMLSLFVMAALTIL), and 61–81 (IILLVFAACEAALGLSLLVMV).

This sequence belongs to the complex I subunit 4L family. As to quaternary structure, core subunit of respiratory chain NADH dehydrogenase (Complex I) which is composed of 45 different subunits.

It is found in the mitochondrion inner membrane. It catalyses the reaction a ubiquinone + NADH + 5 H(+)(in) = a ubiquinol + NAD(+) + 4 H(+)(out). Core subunit of the mitochondrial membrane respiratory chain NADH dehydrogenase (Complex I) which catalyzes electron transfer from NADH through the respiratory chain, using ubiquinone as an electron acceptor. Part of the enzyme membrane arm which is embedded in the lipid bilayer and involved in proton translocation. The chain is NADH-ubiquinone oxidoreductase chain 4L (MT-ND4L) from Bos mutus grunniens (Wild yak).